Reading from the N-terminus, the 218-residue chain is Imidazole glycerol phosphate synthase subunit HisH (218 aa).

One can recognise a Glutamine amidotransferase type-1 domain in the interval 1 to 213 (MTTIIDYGIG…AALPTTEEAG (213 aa)). Residue Cys-79 is the Nucleophile of the active site. Catalysis depends on residues His-188 and Glu-190.

In terms of assembly, heterodimer of HisH and HisF.

It localises to the cytoplasm. The catalysed reaction is 5-[(5-phospho-1-deoxy-D-ribulos-1-ylimino)methylamino]-1-(5-phospho-beta-D-ribosyl)imidazole-4-carboxamide + L-glutamine = D-erythro-1-(imidazol-4-yl)glycerol 3-phosphate + 5-amino-1-(5-phospho-beta-D-ribosyl)imidazole-4-carboxamide + L-glutamate + H(+). It carries out the reaction L-glutamine + H2O = L-glutamate + NH4(+). It participates in amino-acid biosynthesis; L-histidine biosynthesis; L-histidine from 5-phospho-alpha-D-ribose 1-diphosphate: step 5/9. In terms of biological role, IGPS catalyzes the conversion of PRFAR and glutamine to IGP, AICAR and glutamate. The HisH subunit catalyzes the hydrolysis of glutamine to glutamate and ammonia as part of the synthesis of IGP and AICAR. The resulting ammonia molecule is channeled to the active site of HisF. This is Imidazole glycerol phosphate synthase subunit HisH from Salinibacter ruber (strain DSM 13855 / M31).